A 133-amino-acid chain; its full sequence is MTLNLCVLTPNRIVWDSDVKEIILSTNSGQVGILPNHAPLAMALDIGILRIRLNDQWLTMALMGGFARIGNNEITVLVNDAEKGSDIDPQEAQQTLEIAEANLKEAKGKRQTIEANLALRRARTRVESINMIS.

The protein belongs to the ATPase epsilon chain family. In terms of assembly, F-type ATPases have 2 components, CF(1) - the catalytic core - and CF(0) - the membrane proton channel. CF(1) has five subunits: alpha(3), beta(3), gamma(1), delta(1), epsilon(1). CF(0) has three main subunits: a, b and c.

The protein resides in the plastid. It localises to the chloroplast thylakoid membrane. Produces ATP from ADP in the presence of a proton gradient across the membrane. The polypeptide is ATP synthase epsilon chain, chloroplastic (Lotus japonicus (Lotus corniculatus var. japonicus)).